Reading from the N-terminus, the 173-residue chain is RNA 2',3'-cyclic phosphodiesterase (173 aa).

His-38 (proton donor) is an active-site residue. 2 short sequence motifs (HXTX) span residues His-38 to Val-41 and His-118 to Ile-121. His-118 serves as the catalytic Proton acceptor.

This sequence belongs to the 2H phosphoesterase superfamily. ThpR family.

The enzyme catalyses a 3'-end 2',3'-cyclophospho-ribonucleotide-RNA + H2O = a 3'-end 2'-phospho-ribonucleotide-RNA + H(+). In terms of biological role, hydrolyzes RNA 2',3'-cyclic phosphodiester to an RNA 2'-phosphomonoester. The chain is RNA 2',3'-cyclic phosphodiesterase from Methanocaldococcus jannaschii (strain ATCC 43067 / DSM 2661 / JAL-1 / JCM 10045 / NBRC 100440) (Methanococcus jannaschii).